We begin with the raw amino-acid sequence, 496 residues long: Probable cytosol aminopeptidase (496 aa).

Residues K258 and D263 each coordinate Mn(2+). K270 is a catalytic residue. Positions 281, 340, and 342 each coordinate Mn(2+). R344 is an active-site residue.

It belongs to the peptidase M17 family. It depends on Mn(2+) as a cofactor.

The protein resides in the cytoplasm. The enzyme catalyses Release of an N-terminal amino acid, Xaa-|-Yaa-, in which Xaa is preferably Leu, but may be other amino acids including Pro although not Arg or Lys, and Yaa may be Pro. Amino acid amides and methyl esters are also readily hydrolyzed, but rates on arylamides are exceedingly low.. It carries out the reaction Release of an N-terminal amino acid, preferentially leucine, but not glutamic or aspartic acids.. Presumably involved in the processing and regular turnover of intracellular proteins. Catalyzes the removal of unsubstituted N-terminal amino acids from various peptides. The protein is Probable cytosol aminopeptidase of Helicobacter pylori (strain HPAG1).